We begin with the raw amino-acid sequence, 195 residues long: Probable GTP-binding protein EngB (195 aa).

The EngB-type G domain occupies 24 to 195; the sequence is ELPEIALAGR…EAWDAILEKL (172 aa). Residues 32–39, 59–63, 77–80, 144–147, and 176–178 each bind GTP; these read GRSNVGKS, GKTQL, DVPG, TKAD, and FSS. Mg(2+) is bound by residues Ser39 and Thr61.

It belongs to the TRAFAC class TrmE-Era-EngA-EngB-Septin-like GTPase superfamily. EngB GTPase family. Mg(2+) is required as a cofactor.

Functionally, necessary for normal cell division and for the maintenance of normal septation. In Streptococcus pneumoniae (strain ATCC 700669 / Spain 23F-1), this protein is Probable GTP-binding protein EngB.